A 527-amino-acid chain; its full sequence is Matrix metalloproteinase-19 (527 aa).

The first 18 residues, 1-18 (MDWQQLWLAFLLPMTVSG), serve as a signal peptide directing secretion. Positions 19 to 98 (RALGPTEKEA…EDPFNQKSLK (80 aa)) are excised as a propeptide. Residues 84-91 (PRCGLEDP) carry the Cysteine switch motif. Residue cysteine 86 coordinates Zn(2+). Asparagine 109 carries N-linked (GlcNAc...) asparagine glycosylation. Histidine 213 lines the Zn(2+) pocket. Glutamate 214 is an active-site residue. Residues histidine 217 and histidine 223 each contribute to the Zn(2+) site. Hemopexin repeat units lie at residues 286–333 (PNPC…WEGL), 334–372 (PGNLDAAVYSPRTRRTHFFKGNKVWRYVDFKMSPGFPMK), 377–425 (EPNL…FTGV), and 426–471 (PDRP…WMHC). An intrachain disulfide couples cysteine 289 to cysteine 471. Asparagine 464 and asparagine 479 each carry an N-linked (GlcNAc...) asparagine glycan. Residues 473–500 (SQTPDTNSSTGDVTPSTTDTVLGTTPST) form a disordered region. Aspartate 512 carries the GPI-anchor amidated aspartate lipid modification. The propeptide at 513–527 (SASLSFSANVTLLGA) is removed in mature form. Asparagine 521 is a glycosylation site (N-linked (GlcNAc...) asparagine).

The protein belongs to the peptidase M10A family. Requires Zn(2+) as cofactor. It depends on Ca(2+) as a cofactor. Activated by autolytic cleavage after Lys-98. In terms of processing, tyrosine phosphorylated by PKDCC/VLK. As to expression, highly expressed in the liver. Expressed in the arterial tunica media of large blood vessels.

The protein localises to the cell membrane. The protein resides in the secreted. Its subcellular location is the extracellular space. It is found in the extracellular matrix. Functionally, endopeptidase that degrades various components of the extracellular matrix, such as aggrecan and cartilage oligomeric matrix protein (comp), during development, haemostasis and pathological conditions (arthritic disease). May also play a role in neovascularization or angiogenesis. Hydrolyzes collagen type IV, laminin, nidogen, nascin-C isoform, fibronectin, and type I gelatin. This Mus musculus (Mouse) protein is Matrix metalloproteinase-19 (Mmp19).